Reading from the N-terminus, the 187-residue chain is UPF0301 protein HS_0009 (187 aa).

The protein belongs to the UPF0301 (AlgH) family.

The polypeptide is UPF0301 protein HS_0009 (Histophilus somni (strain 129Pt) (Haemophilus somnus)).